Reading from the N-terminus, the 128-residue chain is Sulfurtransferase TusD (128 aa).

Cysteine 78 serves as the catalytic Cysteine persulfide intermediate.

It belongs to the DsrE/TusD family. Heterohexamer, formed by a dimer of trimers. The hexameric TusBCD complex contains 2 copies each of TusB, TusC and TusD. The TusBCD complex interacts with TusE.

It is found in the cytoplasm. Functionally, part of a sulfur-relay system required for 2-thiolation of 5-methylaminomethyl-2-thiouridine (mnm(5)s(2)U) at tRNA wobble positions. Accepts sulfur from TusA and transfers it in turn to TusE. The protein is Sulfurtransferase TusD of Shigella dysenteriae serotype 1 (strain Sd197).